The following is a 376-amino-acid chain: Carbamoyl phosphate synthase small chain (376 aa).

The CPSase stretch occupies residues 1–187 (MRAFLALEDG…AADGAYAWPG (187 aa)). Residues Ser45, Gly239, and Gly241 each contribute to the L-glutamine site. Residues 191 to 376 (RLVVYDYGIK…RGMVREAVGR (186 aa)) form the Glutamine amidotransferase type-1 domain. The active-site Nucleophile is Cys266. Positions 267, 270, 308, 310, and 311 each coordinate L-glutamine. Residues His349 and Glu351 contribute to the active site.

The protein belongs to the CarA family. As to quaternary structure, composed of two chains; the small (or glutamine) chain promotes the hydrolysis of glutamine to ammonia, which is used by the large (or ammonia) chain to synthesize carbamoyl phosphate. Tetramer of heterodimers (alpha,beta)4.

It carries out the reaction hydrogencarbonate + L-glutamine + 2 ATP + H2O = carbamoyl phosphate + L-glutamate + 2 ADP + phosphate + 2 H(+). It catalyses the reaction L-glutamine + H2O = L-glutamate + NH4(+). It participates in amino-acid biosynthesis; L-arginine biosynthesis; carbamoyl phosphate from bicarbonate: step 1/1. It functions in the pathway pyrimidine metabolism; UMP biosynthesis via de novo pathway; (S)-dihydroorotate from bicarbonate: step 1/3. Its function is as follows. Small subunit of the glutamine-dependent carbamoyl phosphate synthetase (CPSase). CPSase catalyzes the formation of carbamoyl phosphate from the ammonia moiety of glutamine, carbonate, and phosphate donated by ATP, constituting the first step of 2 biosynthetic pathways, one leading to arginine and/or urea and the other to pyrimidine nucleotides. The small subunit (glutamine amidotransferase) binds and cleaves glutamine to supply the large subunit with the substrate ammonia. In Nitratidesulfovibrio vulgaris (strain DSM 19637 / Miyazaki F) (Desulfovibrio vulgaris), this protein is Carbamoyl phosphate synthase small chain.